Reading from the N-terminus, the 743-residue chain is Catalase-peroxidase (743 aa).

The segment at 1–29 (MNAESGENAGGGCPLGHGAGAPRKRPSNR) is disordered. The segment covering 8–19 (NAGGGCPLGHGA) has biased composition (gly residues). Residues 100-222 (WHSAGTYRIT…LGAVQMGLIY (123 aa)) constitute a cross-link (tryptophyl-tyrosyl-methioninium (Trp-Tyr) (with M-248)). His-101 acts as the Proton acceptor in catalysis. The segment at residues 222 to 248 (YVNPEGPNGNPDPKAAAVDIRETFARM) is a cross-link (tryptophyl-tyrosyl-methioninium (Tyr-Met) (with W-100)). Heme b is bound at residue His-263.

Belongs to the peroxidase family. Peroxidase/catalase subfamily. As to quaternary structure, homodimer or homotetramer. Requires heme b as cofactor. In terms of processing, formation of the three residue Trp-Tyr-Met cross-link is important for the catalase, but not the peroxidase activity of the enzyme.

The catalysed reaction is H2O2 + AH2 = A + 2 H2O. It carries out the reaction 2 H2O2 = O2 + 2 H2O. Bifunctional enzyme with both catalase and broad-spectrum peroxidase activity. This chain is Catalase-peroxidase, found in Stutzerimonas stutzeri (strain A1501) (Pseudomonas stutzeri).